We begin with the raw amino-acid sequence, 719 residues long: Polyribonucleotide nucleotidyltransferase (719 aa).

Mg(2+)-binding residues include Asp507 and Asp513. Residues 573-633 form the KH domain; the sequence is PKLELFSVDP…EQIKAAKDYI (61 aa). Positions 658–719 constitute an S1 motif domain; sequence GQEFQGIVKK…NGKISVDLCE (62 aa).

It belongs to the polyribonucleotide nucleotidyltransferase family. Requires Mg(2+) as cofactor.

The protein localises to the cytoplasm. The catalysed reaction is RNA(n+1) + phosphate = RNA(n) + a ribonucleoside 5'-diphosphate. Its function is as follows. Involved in mRNA degradation. Catalyzes the phosphorolysis of single-stranded polyribonucleotides processively in the 3'- to 5'-direction. This chain is Polyribonucleotide nucleotidyltransferase, found in Campylobacter jejuni subsp. jejuni serotype O:23/36 (strain 81-176).